Here is a 428-residue protein sequence, read N- to C-terminus: Histidine--tRNA ligase (428 aa).

It belongs to the class-II aminoacyl-tRNA synthetase family.

The protein localises to the cytoplasm. The enzyme catalyses tRNA(His) + L-histidine + ATP = L-histidyl-tRNA(His) + AMP + diphosphate + H(+). In Korarchaeum cryptofilum (strain OPF8), this protein is Histidine--tRNA ligase.